The following is a 466-amino-acid chain: F-box/LRR-repeat protein fbxl-1 (466 aa).

The F-box domain occupies 54–100 (SLINRVLPKEVLLKVFSFLDTKALCRSAQVCRSWSILALDGSNWQRV). 11 LRR repeats span residues 122–147 (GGFLKELSLKGCENVHDSALRTFTSR), 148–173 (CPNLEHLSLYRCKRVTDASCENLGRY), 174–199 (CHKLNYLNLENCSSITDRAMKYIGDG), 200–225 (CPNLSYLNISWCDAIQDRGVQIILSN), 226–251 (CKSLDTLILRGCEGLTENVFGSVEAH), 252–277 (MGAIKKLNLLQCFQLTDITVQNIANG), 278–303 (ATALEYLCMSNCNQISDRSLVSLGQH), 304–329 (SHNLKVLELSGCTLLGDNGFIPLARG), 330–355 (CRQLERLDMEDCSLISDHTINSLANN), 356–381 (CTALRELSLSHCELITDESIQNLASK), and 408–433 (CKALKRIDLYDCQNVSKEAIVRFQHH).

In terms of assembly, component of the SCF (SKP1-CUL1-F-box protein)-type E3 ubiquitin ligase complex. Expressed in neuroglial cells such as the socket cell and sheath cell, neurosecretory motor neurons and regions around the pharynx and anus.

Its subcellular location is the perikaryon. The protein resides in the cell projection. It is found in the dendrite. It localises to the cilium. The protein localises to the axon. Functionally, substrate-recognition component of the SCF (SKP1-CUL1-F-box protein)-type E3 ubiquitin ligase complex. Plays a role in regulating the entry into the dauer state. In hermaphrodites, may play a role in modulating the rate of defecation. In Caenorhabditis elegans, this protein is F-box/LRR-repeat protein fbxl-1.